Here is a 77-residue protein sequence, read N- to C-terminus: Acyl carrier protein (77 aa).

One can recognise a Carrier domain in the interval Ser2 to Gln77. Ser37 carries the O-(pantetheine 4'-phosphoryl)serine modification.

The protein belongs to the acyl carrier protein (ACP) family. 4'-phosphopantetheine is transferred from CoA to a specific serine of apo-ACP by AcpS. This modification is essential for activity because fatty acids are bound in thioester linkage to the sulfhydryl of the prosthetic group.

It localises to the cytoplasm. Its pathway is lipid metabolism; fatty acid biosynthesis. Its function is as follows. Carrier of the growing fatty acid chain in fatty acid biosynthesis. This Vibrio campbellii (strain ATCC BAA-1116) protein is Acyl carrier protein.